Consider the following 284-residue polypeptide: Diaminopimelate epimerase (284 aa).

Asparagine 21, glutamine 54, and asparagine 74 together coordinate substrate. Residue cysteine 83 is the Proton donor of the active site. Substrate-binding positions include glycine 84–asparagine 85, asparagine 167, asparagine 200, and glutamate 218–arginine 219. Cysteine 227 functions as the Proton acceptor in the catalytic mechanism. Residue glycine 228 to serine 229 participates in substrate binding.

This sequence belongs to the diaminopimelate epimerase family. In terms of assembly, homodimer.

Its subcellular location is the cytoplasm. It catalyses the reaction (2S,6S)-2,6-diaminopimelate = meso-2,6-diaminopimelate. It functions in the pathway amino-acid biosynthesis; L-lysine biosynthesis via DAP pathway; DL-2,6-diaminopimelate from LL-2,6-diaminopimelate: step 1/1. Catalyzes the stereoinversion of LL-2,6-diaminopimelate (L,L-DAP) to meso-diaminopimelate (meso-DAP), a precursor of L-lysine and an essential component of the bacterial peptidoglycan. In Buchnera aphidicola subsp. Acyrthosiphon pisum (strain APS) (Acyrthosiphon pisum symbiotic bacterium), this protein is Diaminopimelate epimerase.